The chain runs to 493 residues: Putative BTB/POZ domain-containing protein L35 (493 aa).

Residues 16 to 87 form the BTB domain; sequence TDLKLTLVDD…YLVDNKSEVD (72 aa).

The protein belongs to the mimivirus BTB/WD family.

The polypeptide is Putative BTB/POZ domain-containing protein L35 (Acanthamoeba polyphaga (Amoeba)).